A 105-amino-acid chain; its full sequence is Diuretic hormone class 2 (105 aa).

The signal sequence occupies residues M1–A23. Positions I24–S63 are excised as a propeptide. Residue P96 is modified to Proline amide. The propeptide occupies R101 to A105.

Expressed in central brain, antennal lobes, retrocerebral complex and gnathal, thoracic and abdominal ganglia but not in optical lobes (at protein level).

The protein localises to the secreted. Functionally, regulation of fluid secretion. Stimulates Malpighian tubules fluid secretion. This chain is Diuretic hormone class 2, found in Camponotus floridanus (Florida carpenter ant).